A 367-amino-acid polypeptide reads, in one-letter code: Glutamate 5-kinase (367 aa).

K17 contributes to the ATP binding site. 3 residues coordinate substrate: S57, D144, and N156. Residues 176–177 (SD) and 217–223 (TGGMVSK) contribute to the ATP site. Residues 279–357 (VGSLTLDEGA…SELPCELRRP (79 aa)) form the PUA domain.

The protein belongs to the glutamate 5-kinase family.

The protein resides in the cytoplasm. The enzyme catalyses L-glutamate + ATP = L-glutamyl 5-phosphate + ADP. The protein operates within amino-acid biosynthesis; L-proline biosynthesis; L-glutamate 5-semialdehyde from L-glutamate: step 1/2. Functionally, catalyzes the transfer of a phosphate group to glutamate to form L-glutamate 5-phosphate. This chain is Glutamate 5-kinase, found in Mycobacterium leprae (strain Br4923).